Here is a 302-residue protein sequence, read N- to C-terminus: Sulfate adenylyltransferase subunit 2 (302 aa).

Residues 280–302 (RQGRLIDSDQSASMEQKKRQGYF) form a disordered region.

It belongs to the PAPS reductase family. CysD subfamily. As to quaternary structure, heterodimer composed of CysD, the smaller subunit, and CysN.

It carries out the reaction sulfate + ATP + H(+) = adenosine 5'-phosphosulfate + diphosphate. The protein operates within sulfur metabolism; hydrogen sulfide biosynthesis; sulfite from sulfate: step 1/3. With CysN forms the ATP sulfurylase (ATPS) that catalyzes the adenylation of sulfate producing adenosine 5'-phosphosulfate (APS) and diphosphate, the first enzymatic step in sulfur assimilation pathway. APS synthesis involves the formation of a high-energy phosphoric-sulfuric acid anhydride bond driven by GTP hydrolysis by CysN coupled to ATP hydrolysis by CysD. The sequence is that of Sulfate adenylyltransferase subunit 2 from Shewanella oneidensis (strain ATCC 700550 / JCM 31522 / CIP 106686 / LMG 19005 / NCIMB 14063 / MR-1).